The following is a 636-amino-acid chain: Putative ankyrin repeat protein L766 (636 aa).

11 ANK repeats span residues 63–97, 99–129, 130–159, 161–190, 230–259, 261–284, 322–355, 372–400, 425–455, 517–546, and 548–575; these read NNYLTSHVIKSTKYSLLDVNTVQMLLDYKDPDYEL, STCHLYIFYMTKNRFDICDYLIASNIKYIDS, FGNISLLNSTNLNNYQLIKYIIDNNEFFNC, YYYLMLGILRYTKFYDLVDYILELISKSNN, FDEKVLFDTVICNNFELTKYLVEKGFNYDF, TIINSNVKFDVLKYFIELGNYLTD, SRIIHFEFYLLDYLTNKLNIIELIDLDLLMKTSI, NPDEYMEFAIKHDICIAKKLMELGGNIPD, DSLENLLPKIINNCDSEIIMYIIKKLTDTTI, NSIELLFVVTLSENIELFKLLLEINCNDNN, and LSWAFVFSIGCFKLMKYIVDNYNIDIYQ.

This chain is Putative ankyrin repeat protein L766, found in Acanthamoeba polyphaga mimivirus (APMV).